The sequence spans 353 residues: UPF0283 membrane protein YcjF (353 aa).

Residues 1-19 (MSEPLKPRIDFAEPLKEEP) show a composition bias toward basic and acidic residues. Residues 1–35 (MSEPLKPRIDFAEPLKEEPTSAFKAQQTFSEAESR) form a disordered region. 3 consecutive transmembrane segments (helical) span residues 70 to 90 (MVMG…VQWT), 100 to 120 (VALG…GSVV), and 213 to 233 (ESTL…FIAW).

Belongs to the UPF0283 family.

The protein localises to the cell inner membrane. The polypeptide is UPF0283 membrane protein YcjF (Salmonella paratyphi C (strain RKS4594)).